The chain runs to 199 residues: Probable GTP-binding protein EngB (199 aa).

In terms of domain architecture, EngB-type G spans 22–195 (QLPEIALSGR…WEWIEQQCDI (174 aa)). Residues 30–37 (GRSNVGKS), 57–61 (GKTQT), 75–78 (DVPG), 142–145 (TKMD), and 174–176 (FSA) each bind GTP. Positions 37 and 59 each coordinate Mg(2+).

This sequence belongs to the TRAFAC class TrmE-Era-EngA-EngB-Septin-like GTPase superfamily. EngB GTPase family. Mg(2+) is required as a cofactor.

Functionally, necessary for normal cell division and for the maintenance of normal septation. The sequence is that of Probable GTP-binding protein EngB from Latilactobacillus sakei subsp. sakei (strain 23K) (Lactobacillus sakei subsp. sakei).